Consider the following 513-residue polypeptide: ATP synthase subunit alpha (513 aa).

Residue 169–176 (GDRQTGKS) coordinates ATP.

This sequence belongs to the ATPase alpha/beta chains family. As to quaternary structure, F-type ATPases have 2 components, CF(1) - the catalytic core - and CF(0) - the membrane proton channel. CF(1) has five subunits: alpha(3), beta(3), gamma(1), delta(1), epsilon(1). CF(0) has three main subunits: a(1), b(2) and c(9-12). The alpha and beta chains form an alternating ring which encloses part of the gamma chain. CF(1) is attached to CF(0) by a central stalk formed by the gamma and epsilon chains, while a peripheral stalk is formed by the delta and b chains.

The protein resides in the cell membrane. It catalyses the reaction ATP + H2O + 4 H(+)(in) = ADP + phosphate + 5 H(+)(out). Produces ATP from ADP in the presence of a proton gradient across the membrane. The alpha chain is a regulatory subunit. This chain is ATP synthase subunit alpha, found in Baumannia cicadellinicola subsp. Homalodisca coagulata.